Here is a 540-residue protein sequence, read N- to C-terminus: NXPE family member 1 (540 aa).

The signal sequence occupies residues 1–22 (MLHKYLKLICLLAAICVLCIIS). Asparagine 24, asparagine 42, asparagine 87, asparagine 155, asparagine 205, and asparagine 291 each carry an N-linked (GlcNAc...) asparagine glycan.

Belongs to the NXPE family. In terms of tissue distribution, intestine, and to a lesser extent in kidney.

Its subcellular location is the secreted. The sequence is that of NXPE family member 1 (NXPE1) from Oryctolagus cuniculus (Rabbit).